Consider the following 232-residue polypeptide: LRRN4 C-terminal-like protein (232 aa).

The N-terminal stretch at 1–22 (MPHSPCLLWLLAVTSLVPGTQP) is a signal peptide. Over 23-189 (LVAGDLEGDE…RLTVPPRPLT (167 aa)) the chain is Extracellular. Residues 77-172 (PPHPPRLGEV…GAEGLDSADG (96 aa)) enclose the Fibronectin type-III domain. N-linked (GlcNAc...) asparagine glycosylation occurs at Asn-127. A helical membrane pass occupies residues 190-210 (LLHAAMGVGSALALLSCSALV). Over 211 to 232 (WHFCLRQRWGCPRRGRPSHAGL) the chain is Cytoplasmic.

It is found in the membrane. The polypeptide is LRRN4 C-terminal-like protein (LRRN4CL) (Bos taurus (Bovine)).